The following is a 30-amino-acid chain: Trypsin inhibitor 6 (30 aa).

Cystine bridges form between Cys4-Cys21, Cys11-Cys23, and Cys17-Cys29.

The protein belongs to the protease inhibitor I7 (squash-type serine protease inhibitor) family.

Its subcellular location is the secreted. Its function is as follows. Strongly inhibits trypsin, weakly inhibits chymotrypsin. The protein is Trypsin inhibitor 6 of Cyclanthera pedata (Achocha).